The following is a 424-amino-acid chain: UPF0229 protein PFL_5654 (424 aa).

A disordered region spans residues 85 to 108; it reads GEHIARPQGGGGGGGGRGKAGNSG. Residues 92 to 108 show a composition bias toward gly residues; that stretch reads QGGGGGGGGRGKAGNSG.

This sequence belongs to the UPF0229 family.

This chain is UPF0229 protein PFL_5654, found in Pseudomonas fluorescens (strain ATCC BAA-477 / NRRL B-23932 / Pf-5).